A 271-amino-acid chain; its full sequence is NAD kinase (271 aa).

Catalysis depends on D64, which acts as the Proton acceptor. NAD(+)-binding positions include 64 to 65, R69, 132 to 133, K143, R160, D162, 173 to 178, A197, and Q231; these read DG, NE, and TAYAMS.

The protein belongs to the NAD kinase family. The cofactor is a divalent metal cation.

The protein localises to the cytoplasm. The catalysed reaction is NAD(+) + ATP = ADP + NADP(+) + H(+). Its function is as follows. Involved in the regulation of the intracellular balance of NAD and NADP, and is a key enzyme in the biosynthesis of NADP. Catalyzes specifically the phosphorylation on 2'-hydroxyl of the adenosine moiety of NAD to yield NADP. The protein is NAD kinase of Methanocorpusculum labreanum (strain ATCC 43576 / DSM 4855 / Z).